The chain runs to 475 residues: MAGRPHPYDGNSSDPENWDRKLHSRPRKLYKHSSTSSRIAKGGVDHTKMSLHGASGGHERSRDRRRSSDRSRDSSHERTESQLTPCIRNVTSPTRQHHVEREKDHSSSRPSSPRPQKASPNGSISSAGNSSRNSSQSSSDGSCKTAGEMVFVYENAKEGARNIRTSERVTLIVDNTRFVVDPSIFTAQPNTMLGRMFGSGREHNFTRPNEKGEYEVAEGIGSTVFRAILDYYKTGIIRCPDGISIPELREACDYLCISFEYSTIKCRDLSALMHELSNDGARRQFEFYLEEMILPLMVASAQSGERECHIVVLTDDDVVDWDEEYPPQMGEEYSQIIYSTKLYRFFKYIENRDVAKSVLKERGLKKIRLGIEGYPTYKEKVKKRPGGRPEVIYNYVQRPFIRMSWEKEEGKSRHVDFQCVKSKSITNLAAAAADIPQDQLVVMHPTPQVDELDILPIHPPSGNSDLDPDAQNPML.

Residues 1–143 (MAGRPHPYDG…SSQSSSDGSC (143 aa)) are disordered. Over residues 22-31 (LHSRPRKLYK) the composition is skewed to basic residues. Over residues 57 to 80 (GHERSRDRRRSSDRSRDSSHERTE) the composition is skewed to basic and acidic residues. Polar residues predominate over residues 81 to 94 (SQLTPCIRNVTSPT). Residues 97–107 (HHVEREKDHSS) are compositionally biased toward basic and acidic residues. The segment covering 108–142 (SRPSSPRPQKASPNGSISSAGNSSRNSSQSSSDGS) has biased composition (low complexity). Residues 146–475 (AGEMVFVYEN…LDPDAQNPML (330 aa)) are interaction with AKT family members. The 75-residue stretch at 167 to 241 (ERVTLIVDNT…YKTGIIRCPD (75 aa)) folds into the BTB domain. Residues 455-475 (LPIHPPSGNSDLDPDAQNPML) form a disordered region.

Interacts (via C-terminal 330-amino-acid region) with AKT1; AKT2 and AKT3. Interacts with PPP2CA and PPP1CA. In terms of tissue distribution, ubiquitously expressed. Highly expressed in adult brain, testis, aorta and small intestine and weakly expressed in the heart, lung, liver, kidney, pancreas, spleen, thymus, prostate, ovary and colon. Down-regulated in glioma.

It is found in the nucleus. Its subcellular location is the cytoplasm. Its function is as follows. Plays a major role as an activator of AKT family members by inhibiting PPP2CA-mediated dephosphorylation, thereby keeping AKTs activated. Plays a role in preventing motor neuronal death and accelerating the growth of pancreatic beta cells. In Homo sapiens (Human), this protein is BTB/POZ domain-containing protein 10 (BTBD10).